A 233-amino-acid chain; its full sequence is Phosphoenolpyruvate guanylyltransferase 1 (233 aa).

The phosphoenolpyruvate site is built by Thr-154, Gly-171, and Ser-174.

The protein belongs to the CofC family.

It catalyses the reaction phosphoenolpyruvate + GTP + H(+) = enolpyruvoyl-2-diphospho-5'-guanosine + diphosphate. The protein operates within cofactor biosynthesis; coenzyme F420 biosynthesis. Its function is as follows. Guanylyltransferase that catalyzes the activation of phosphoenolpyruvate (PEP) as enolpyruvoyl-2-diphospho-5'-guanosine, via the condensation of PEP with GTP. It is involved in the biosynthesis of coenzyme F420, a hydride carrier cofactor. In Rhodococcus jostii (strain RHA1), this protein is Phosphoenolpyruvate guanylyltransferase 1.